A 158-amino-acid chain; its full sequence is Phosphopantetheine adenylyltransferase (158 aa).

Threonine 8 provides a ligand contact to substrate. ATP-binding positions include 8–9 (TF) and histidine 16. The substrate site is built by lysine 40, leucine 72, and arginine 86. ATP contacts are provided by residues 87–89 (GLR), glutamate 97, and 122–128 (HAFISSS).

It belongs to the bacterial CoaD family. As to quaternary structure, homohexamer. The cofactor is Mg(2+).

It localises to the cytoplasm. The enzyme catalyses (R)-4'-phosphopantetheine + ATP + H(+) = 3'-dephospho-CoA + diphosphate. The protein operates within cofactor biosynthesis; coenzyme A biosynthesis; CoA from (R)-pantothenate: step 4/5. Reversibly transfers an adenylyl group from ATP to 4'-phosphopantetheine, yielding dephospho-CoA (dPCoA) and pyrophosphate. The protein is Phosphopantetheine adenylyltransferase of Campylobacter jejuni subsp. jejuni serotype O:6 (strain 81116 / NCTC 11828).